A 530-amino-acid chain; its full sequence is Glucose-6-phosphate isomerase (530 aa).

The active-site Proton donor is glutamate 356. Active-site residues include histidine 387 and lysine 502.

The protein belongs to the GPI family.

The protein localises to the cytoplasm. It catalyses the reaction alpha-D-glucose 6-phosphate = beta-D-fructose 6-phosphate. It participates in carbohydrate biosynthesis; gluconeogenesis. It functions in the pathway carbohydrate degradation; glycolysis; D-glyceraldehyde 3-phosphate and glycerone phosphate from D-glucose: step 2/4. Functionally, catalyzes the reversible isomerization of glucose-6-phosphate to fructose-6-phosphate. The polypeptide is Glucose-6-phosphate isomerase (Borreliella burgdorferi (strain ATCC 35210 / DSM 4680 / CIP 102532 / B31) (Borrelia burgdorferi)).